Here is a 260-residue protein sequence, read N- to C-terminus: Hemin import ATP-binding protein HmuV (260 aa).

The ABC transporter domain maps to 6–242; that stretch reads LSGRNISMKY…ERIEQVYGYR (237 aa). An ATP-binding site is contributed by 38–45; it reads GPNGAGKS.

The protein belongs to the ABC transporter superfamily. Heme (hemin) importer (TC 3.A.1.14.5) family. As to quaternary structure, the complex is composed of two ATP-binding proteins (HmuV), two transmembrane proteins (HmuU) and a solute-binding protein (HmuT).

It localises to the cell inner membrane. In terms of biological role, part of the ABC transporter complex HmuTUV involved in hemin import. Responsible for energy coupling to the transport system. This chain is Hemin import ATP-binding protein HmuV, found in Vibrio parahaemolyticus serotype O3:K6 (strain RIMD 2210633).